An 850-amino-acid polypeptide reads, in one-letter code: MSARPFADLRERLKSGRASLAAAYREKPRAAHYLARHAALVDALLAELSTRLGLARGICLVAVGGYGRGELFPGSDVDVMLLLPAEPLEAERQALESWVQACWDVGLEIGHSVRTVDACLAEADADITVETNLLEARRVWGATALFDDFGRRFRARFDAQRFFDGKLAEQHARHARFDDSAYKLEPNLKDSPGGLRDLHTIHWLAQACDIDAGWSGIARAGLLTEGEARRVAREERWLAKLRIHLHLLAGRREDRLAFDYQSELAACLGLAPTAHRRAGERLMQGYFRAAKLVQRANDILIQSLRVRLFPVVAPPLPIDDDFQLRAGLLEARDPDVFLRKPDALLRAFLVYARHPQLAGFEPTTLRAVWRASARVDRAFRATPAHRALFIALLREPLGVTRALRAMHRYGLLGRYIPAFGRIVGQMQHDLFHVYTVDEHILTVLRNLRRFTVAQLAHEFPLASRLIAAFDKPELLYLAALFHDIAKGRGGDHSALGALDARGFCRQHGLDKTDTDLVAWLVDMHLVMSRTSQKEDISDPKVIAAFAARVGDTRRLDALYLLTVADIRGTSPTVWNAWKGKLLEDLYHAAFARLQGADLAIAGIAARREEARVNLALYGLPRDAADALWRHLDKAYFARFDARDMAWHARMLWRRDATAGAVVRARLSPAGEGIQVMVYAPDRPDIFVRICAFFARIQYTVLEAKIHTTRNGYALDSFQVMDLAHRNIHYRDFLAFVEYELARDLDPARPLQAVQPGRLSRHQRHHPYPAAVHLEADRGGDGQVLSITCADRGGLLFAIAEELMRHEISVYAAKIDTLGERVEDTFLIRGERLNAPPERAALENELRGVLG.

The uridylyltransferase stretch occupies residues 1–317 (MSARPFADLR…LFPVVAPPLP (317 aa)). The interval 318 to 673 (IDDDFQLRAG…ARLSPAGEGI (356 aa)) is uridylyl-removing. The HD domain occupies 436–558 (VDEHILTVLR…VGDTRRLDAL (123 aa)). ACT domains are found at residues 674-755 (QVMV…AVQP) and 783-850 (VLSI…GVLG).

The protein belongs to the GlnD family. Requires Mg(2+) as cofactor.

It catalyses the reaction [protein-PII]-L-tyrosine + UTP = [protein-PII]-uridylyl-L-tyrosine + diphosphate. The catalysed reaction is [protein-PII]-uridylyl-L-tyrosine + H2O = [protein-PII]-L-tyrosine + UMP + H(+). With respect to regulation, uridylyltransferase (UTase) activity is inhibited by glutamine, while glutamine activates uridylyl-removing (UR) activity. Modifies, by uridylylation and deuridylylation, the PII regulatory proteins (GlnB and homologs), in response to the nitrogen status of the cell that GlnD senses through the glutamine level. Under low glutamine levels, catalyzes the conversion of the PII proteins and UTP to PII-UMP and PPi, while under higher glutamine levels, GlnD hydrolyzes PII-UMP to PII and UMP (deuridylylation). Thus, controls uridylylation state and activity of the PII proteins, and plays an important role in the regulation of nitrogen assimilation and metabolism. The sequence is that of Bifunctional uridylyltransferase/uridylyl-removing enzyme from Thiobacillus denitrificans (strain ATCC 25259 / T1).